Consider the following 199-residue polypeptide: Transgelin-3 (199 aa).

Residues 24–136 (ADLENKLVDW…RTLMALGSVA (113 aa)) form the Calponin-homology (CH) domain. Serine 163 is subject to Phosphoserine. The stretch at 174 to 199 (IGLQMGSNKGASQAGMTGYGMPRQIM) is one Calponin-like repeat. The span at 176–188 (LQMGSNKGASQAG) shows a compositional bias: polar residues. The interval 176 to 199 (LQMGSNKGASQAGMTGYGMPRQIM) is disordered.

It belongs to the calponin family.

The polypeptide is Transgelin-3 (TAGLN3) (Pongo abelii (Sumatran orangutan)).